We begin with the raw amino-acid sequence, 762 residues long: Homeobox-leucine zipper protein MERISTEM L1 (762 aa).

A disordered region spans residues 13–72 (MFDMTPKNSENDLGITGSHEEDFETKSGAEVTMENPLEEELQDPNQRPNKKKRYHRHTQR). Residues 30–39 (SHEEDFETKS) show a composition bias toward basic and acidic residues. The segment covering 60–71 (PNKKKRYHRHTQ) has biased composition (basic residues). Positions 62 to 121 (KKKRYHRHTQRQIQELESFFKECPHPDDKQRKELSRELSLEPLQVKFWFQNKRTQMKAQH) form a DNA-binding region, homeobox. Residues 110 to 192 (FQNKRTQMKA…DRISAIAAKY (83 aa)) are a coiled coil. An START domain is found at 253–484 (SEADKPMIVE…LDRQCERLAS (232 aa)).

This sequence belongs to the HD-ZIP homeobox family. Class IV subfamily. In terms of assembly, interacts with GAI/RGA2, RGA/RGA1/GRS, RGL2/SCL19 and PDF2. Interacts with AIL7/PLT7, ANT, BBM and AIL1.

It localises to the nucleus. Functionally, probable transcription factor involved in cell specification and pattern formation during embryogenesis. Binds to the L1 box DNA sequence 5'-TAAATG[CT]A-3'. Plays a role in maintaining the identity of L1 cells, possibly by interacting with their L1 box or other target-gene promoters; binds to the LIP1 gene promoter and stimulates its expression upon imbibition. Acts as a positive regulator of gibberellins (GAs)-regulated epidermal gene expression (e.g. LIP1, LIP2, LTP1, FDH and PDF1). Functionally redundant to PDF2. Seems to promote cell differentiation. This is Homeobox-leucine zipper protein MERISTEM L1 from Arabidopsis thaliana (Mouse-ear cress).